Here is a 181-residue protein sequence, read N- to C-terminus: Adenine phosphoribosyltransferase (181 aa).

Belongs to the purine/pyrimidine phosphoribosyltransferase family. As to quaternary structure, homodimer.

The protein localises to the cytoplasm. It carries out the reaction AMP + diphosphate = 5-phospho-alpha-D-ribose 1-diphosphate + adenine. Its pathway is purine metabolism; AMP biosynthesis via salvage pathway; AMP from adenine: step 1/1. Its function is as follows. Catalyzes a salvage reaction resulting in the formation of AMP, that is energically less costly than de novo synthesis. In Methylobacterium nodulans (strain LMG 21967 / CNCM I-2342 / ORS 2060), this protein is Adenine phosphoribosyltransferase.